Consider the following 1260-residue polypeptide: Methionine synthase (1260 aa).

Residues Phe-13–Ile-333 enclose the Hcy-binding domain. 3 residues coordinate Zn(2+): Cys-255, Cys-318, and Cys-319. A Pterin-binding domain is found at Phe-364–Glu-625. The 95-residue stretch at Glu-655–Arg-749 folds into the B12-binding N-terminal domain. Residues Glu-699, Gly-775–Asp-779, His-778, Ser-823, Thr-827, and Ala-879 contribute to the methylcob(III)alamin site. The B12-binding domain occupies Gly-766–Val-883. The region spanning Ser-916–Leu-1256 is the AdoMet activation domain. S-adenosyl-L-methionine is bound by residues Asp-966, Arg-1163, and Tyr-1218–Phe-1219.

It belongs to the vitamin-B12 dependent methionine synthase family. Methylcob(III)alamin serves as cofactor. Zn(2+) is required as a cofactor.

The catalysed reaction is (6S)-5-methyl-5,6,7,8-tetrahydrofolate + L-homocysteine = (6S)-5,6,7,8-tetrahydrofolate + L-methionine. The protein operates within amino-acid biosynthesis; L-methionine biosynthesis via de novo pathway; L-methionine from L-homocysteine (MetH route): step 1/1. Functionally, catalyzes the transfer of a methyl group from methyl-cobalamin to homocysteine, yielding enzyme-bound cob(I)alamin and methionine. Subsequently, remethylates the cofactor using methyltetrahydrofolate. This chain is Methionine synthase (mtr), found in Dictyostelium discoideum (Social amoeba).